A 729-amino-acid polypeptide reads, in one-letter code: 1,4-alpha-glucan branching enzyme GlgB (729 aa).

Aspartate 405 acts as the Nucleophile in catalysis. Catalysis depends on glutamate 458, which acts as the Proton donor.

The protein belongs to the glycosyl hydrolase 13 family. GlgB subfamily. As to quaternary structure, monomer.

The catalysed reaction is Transfers a segment of a (1-&gt;4)-alpha-D-glucan chain to a primary hydroxy group in a similar glucan chain.. It participates in glycan biosynthesis; glycogen biosynthesis. In terms of biological role, catalyzes the formation of the alpha-1,6-glucosidic linkages in glycogen by scission of a 1,4-alpha-linked oligosaccharide from growing alpha-1,4-glucan chains and the subsequent attachment of the oligosaccharide to the alpha-1,6 position. The sequence is that of 1,4-alpha-glucan branching enzyme GlgB from Mannheimia succiniciproducens (strain KCTC 0769BP / MBEL55E).